Here is a 296-residue protein sequence, read N- to C-terminus: Centromere protein O (296 aa).

Positions 17–105 (VLAHLERLET…NMKAILQAYR (89 aa)) form a coiled coil.

This sequence belongs to the CENP-O/MCM21 family. Component of the CENPA-CAD complex, composed of CENPI, CENPK, CENPL, CENPO, CENPP, CENPQ, CENPR and CENPS. The CENPA-CAD complex interacts with the CENPA-NAC complex, at least composed of CENPA, CENPC, CENPH, CENPM, CENPN, CENPT and CENPU.

It is found in the nucleus. The protein localises to the chromosome. It localises to the centromere. The protein resides in the kinetochore. Its function is as follows. Component of the CENPA-CAD (nucleosome distal) complex, a complex recruited to centromeres which is involved in assembly of kinetochore proteins, mitotic progression and chromosome segregation. May be involved in incorporation of newly synthesized CENPA into centromeres via its interaction with the CENPA-NAC complex. Modulates the kinetochore-bound levels of NDC80 complex. This Bos taurus (Bovine) protein is Centromere protein O (CENPO).